A 98-amino-acid polypeptide reads, in one-letter code: Large ribosomal subunit protein uL23 (98 aa).

This sequence belongs to the universal ribosomal protein uL23 family. As to quaternary structure, part of the 50S ribosomal subunit. Contacts protein L29, and trigger factor when it is bound to the ribosome.

In terms of biological role, one of the early assembly proteins it binds 23S rRNA. One of the proteins that surrounds the polypeptide exit tunnel on the outside of the ribosome. Forms the main docking site for trigger factor binding to the ribosome. This chain is Large ribosomal subunit protein uL23, found in Bifidobacterium animalis subsp. lactis (strain AD011).